The chain runs to 156 residues: Zinc finger SWIM domain-containing protein 7 homolog (156 aa).

Residues 82–120 (YMCLIQGDYCSCPSFNFSVLLKSDSVYCKHQISSILAEI) form an SWIM-type zinc finger.

Belongs to the SWS1 family.

The protein localises to the nucleus. Functionally, may be involved in the homologous recombination repair (HRR) pathway of double-stranded DNA breaks arising during DNA replication or induced by DNA-damaging agents. The polypeptide is Zinc finger SWIM domain-containing protein 7 homolog (zswim7) (Dictyostelium discoideum (Social amoeba)).